Consider the following 927-residue polypeptide: Isoleucine--tRNA ligase (927 aa).

Positions 57-67 (PFANGNIHMGH) match the 'HIGH' region motif. An L-isoleucyl-5'-AMP-binding site is contributed by E553. Residues 594–598 (KMSKS) carry the 'KMSKS' region motif. ATP is bound at residue K597. Zn(2+)-binding residues include C886, C889, C906, and C909.

It belongs to the class-I aminoacyl-tRNA synthetase family. IleS type 1 subfamily. In terms of assembly, monomer. Zn(2+) is required as a cofactor.

The protein localises to the cytoplasm. The enzyme catalyses tRNA(Ile) + L-isoleucine + ATP = L-isoleucyl-tRNA(Ile) + AMP + diphosphate. In terms of biological role, catalyzes the attachment of isoleucine to tRNA(Ile). As IleRS can inadvertently accommodate and process structurally similar amino acids such as valine, to avoid such errors it has two additional distinct tRNA(Ile)-dependent editing activities. One activity is designated as 'pretransfer' editing and involves the hydrolysis of activated Val-AMP. The other activity is designated 'posttransfer' editing and involves deacylation of mischarged Val-tRNA(Ile). In Lactobacillus helveticus (strain DPC 4571), this protein is Isoleucine--tRNA ligase.